A 55-amino-acid polypeptide reads, in one-letter code: Large ribosomal subunit protein bL33 (55 aa).

Belongs to the bacterial ribosomal protein bL33 family.

The polypeptide is Large ribosomal subunit protein bL33 (Bartonella quintana (strain Toulouse) (Rochalimaea quintana)).